Consider the following 291-residue polypeptide: Putative transport permease ycf38 (291 aa).

Helical transmembrane passes span 47 to 67 (ATLM…GGLF), 87 to 107 (SGII…PLMF), 135 to 155 (FMTC…LFMG), 165 to 185 (LIFA…SLAL), 195 to 215 (LLAL…ALAP), and 262 to 282 (ISLG…AYIV). The region spanning 47-289 (ATLMAGIIQP…YIVSNILKAR (243 aa)) is the ABC transmembrane type-2 domain.

This sequence belongs to the ABC-2 integral membrane protein family.

The protein resides in the plastid. Its subcellular location is the chloroplast membrane. The sequence is that of Putative transport permease ycf38 (ycf38) from Porphyra purpurea (Red seaweed).